The chain runs to 86 residues: Molybdopterin synthase sulfur carrier subunit (86 aa).

1-thioglycine; alternate is present on Gly-86. Gly-86 bears the Glycyl adenylate; alternate mark.

The protein belongs to the MoaD family. MOCS2A subfamily. In terms of assembly, heterotetramer; composed of 2 small (mocs2s) and 2 large (mocs2l) subunits. C-terminal thiocarboxylation occurs in 2 steps, it is first acyl-adenylated (-COAMP) via the hesA/moeB/thiF part of mocs3, then thiocarboxylated (-COSH) via the rhodanese domain of mocs3.

The protein localises to the cytoplasm. The protein operates within cofactor biosynthesis; molybdopterin biosynthesis. Functionally, acts as a sulfur carrier required for molybdopterin biosynthesis. Component of the molybdopterin synthase complex that catalyzes the conversion of precursor Z into molybdopterin by mediating the incorporation of 2 sulfur atoms into precursor Z to generate a dithiolene group. In the complex, serves as sulfur donor by being thiocarboxylated (-COSH) at its C-terminus by mocs3. After interaction with mocs2l, the sulfur is then transferred to precursor Z to form molybdopterin. This chain is Molybdopterin synthase sulfur carrier subunit (mocs2s), found in Dictyostelium discoideum (Social amoeba).